The sequence spans 406 residues: MSGCPFLGNNFGYTFKKLPVEGSEEDKSQTGVNRASKGGLIYGNYLHLEKVLNAQELQSETKGNKIHDEHLFIITHQAYELWFKQILWELDSVREIFQNGHVRDERNMLKVVSRMHRVSVILKLLVQQFSILETMTALDFNDFREYLSPASGFQSLQFRLLENKIGVLQNMRVPYNRRHYRDNFKGEENELLLKSEQEKTLLELVEAWLERTPGLEPHGFNFWGKLEKNITRGLEEEFIRIQAKEESEEKEEQVAEFQKQKEVLLSLFDEKRHEHLLSKGERRLSYRALQGALMIYFYREEPRFQVPFQLLTSLMDIDSLMTKWRYNHVCMVHRMLGSKAGTGGSSGYHYLRSTVSDRYKVFVDLFNLSTYLIPRHWIPKMNPTIHKFLYTAEYCDSSYFSSDESD.

Substrate is bound by residues 72-76 (FIITH) and arginine 144. Histidine 328 is a heme binding site. Position 342 (threonine 342) interacts with substrate.

Belongs to the tryptophan 2,3-dioxygenase family. As to quaternary structure, homotetramer. Dimer of dimers. Heme serves as cofactor.

It carries out the reaction L-tryptophan + O2 = N-formyl-L-kynurenine. Its pathway is amino-acid degradation; L-tryptophan degradation via kynurenine pathway; L-kynurenine from L-tryptophan: step 1/2. In terms of biological role, heme-dependent dioxygenase that catalyzes the oxidative cleavage of the L-tryptophan (L-Trp) pyrrole ring and converts L-tryptophan to N-formyl-L-kynurenine. Catalyzes the oxidative cleavage of the indole moiety. In Homo sapiens (Human), this protein is Tryptophan 2,3-dioxygenase.